Reading from the N-terminus, the 633-residue chain is Extracellular metalloproteinase mep (633 aa).

A signal peptide spans 1-18 (MRLLSLAGAMALPLCVLA). The propeptide occupies 19–244 (HPTHRTRGIA…IHGVVDYISD (226 aa)). A glycan (N-linked (GlcNAc...) asparagine) is linked at N326. H428 lines the Zn(2+) pocket. E429 is a catalytic residue. Position 432 (H432) interacts with Zn(2+). An N-linked (GlcNAc...) asparagine glycan is attached at N514.

The protein belongs to the peptidase M36 family. Requires Zn(2+) as cofactor.

It localises to the secreted. In terms of biological role, secreted metalloproteinase that allows assimilation of proteinaceous substrates. The sequence is that of Extracellular metalloproteinase mep (mep) from Aspergillus terreus (strain NIH 2624 / FGSC A1156).